The primary structure comprises 20 residues: Protein PR-L6 (20 aa).

Belongs to the BetVI family.

In Lupinus luteus (European yellow lupine), this protein is Protein PR-L6.